The chain runs to 423 residues: MLSFLGKSVALLAALQATLSSPKPGHRRASVEKRANGYANSVYFTNWGIYDRNFQPADLVASDVTHVIYSFMNLQADGTVISGDTYADYEKHYADDSWNDVGTNAYGCVKQLFKVKKANRGLKVLLSIGGWTWSTNFPSAASTDANRKNFAKTAITFMKDWGFDGIDIDWEYPADATQASNMILLLKEVRSQRDAYAAQYAPGYHFLLTIAAPAGKDNYSKLRLADLGQVLDYINLMAYDYAGSFSPLTGHDANLFNNPSNPNATPFNTDSAVKDYINGGVPANKIVLGMPIYGRSFQNTAGIGQTYNGVGSGSWEAGIWDYKALPKAGATVQYDSVAKGYYSYNSATKELISFDTPDMINTKVAYLKSLGLGGSMFWEASADKKGADSVIGTSHRALGGLDTTQNLLSYPNSKYDNIKNGLN.

The N-terminal stretch at 1 to 22 (MLSFLGKSVALLAALQATLSSP) is a signal peptide. Residues 23 to 34 (KPGHRRASVEKR) constitute a propeptide that is removed on maturation. In terms of domain architecture, GH18 spans 38-401 (YANSVYFTNW…GTSHRALGGL (364 aa)). Chitin is bound by residues 102–103 (GT) and 129–132 (GGWT). Glutamate 171 functions as the Proton donor in the catalytic mechanism. A chitin-binding site is contributed by tyrosine 172. The N-linked (GlcNAc...) asparagine glycan is linked to asparagine 218. Residues 237-240 (MAYD) and tryptophan 378 each bind chitin.

It belongs to the glycosyl hydrolase 18 family. Chitinase class V subfamily.

It localises to the secreted. It catalyses the reaction Random endo-hydrolysis of N-acetyl-beta-D-glucosaminide (1-&gt;4)-beta-linkages in chitin and chitodextrins.. In terms of biological role, secreted chitinase involved in the degradation of chitin, a component of the cell walls of fungi and exoskeletal elements of some animals (including worms and arthropods). Plays a morphogenetic role during apical growth, cell division and differentiation (cell wall morphogenesis). Also acts as an antifungal agent. Involved in the degradation and further assimilation of phytopathogenic fungi, namely mycoparasitism, the major mechanism accounting for the antagonistic activity against phytopathogenic fungi displayed by Trichoderma. The polypeptide is Endochitinase 42 (chit42) (Trichoderma harzianum (Hypocrea lixii)).